Here is a 256-residue protein sequence, read N- to C-terminus: POU domain class 2-associating factor 1 (256 aa).

A disordered region spans residues 1–24 (MLWQKSTAPEQAPAPPRPYQGVRV). The region spanning 16 to 38 (PRPYQGVRVKEPVKELLRRKRGH) is the OCA domain.

It belongs to the POU2AF family. As to quaternary structure, interacts with POU2F1/OCT1 and POU2F2/OCT2; the interaction increases POU2F1 and POU2F2 transactivation activity. Post-translationally, ubiquitinated; mediated by SIAH1 or SIAH2 and leading to its subsequent proteasomal degradation. In terms of tissue distribution, B-cell specific.

It localises to the nucleus. Its function is as follows. Transcriptional coactivator that specifically associates with either POU2F1/OCT1 or POU2F2/OCT2. It boosts the POU2F1/OCT1 mediated promoter activity and to a lesser extent, that of POU2F2/OCT2. It recognizes the POU domains of POU2F1/OCT1 and POU2F2/OCT2. It is essential for the response of B-cells to antigens and required for the formation of germinal centers. Regulates IL6 expression in B cells as POU2F2/OCT2 coactivator. This chain is POU domain class 2-associating factor 1, found in Mus musculus (Mouse).